The sequence spans 250 residues: Probable transcriptional regulatory protein SCO1521 (250 aa).

This sequence belongs to the TACO1 family.

It is found in the cytoplasm. In Streptomyces coelicolor (strain ATCC BAA-471 / A3(2) / M145), this protein is Probable transcriptional regulatory protein SCO1521.